A 318-amino-acid polypeptide reads, in one-letter code: MLTTNILCLIIPILLAVAFLTLVERKILGYMQFRKGPNIVGPYGLLQPAADATKLFTKEPLHPLTSSKFMFTIAPTLALTLALTLWIPLPMPYPLIDLNLGILFILAVSSLAVYSILWSGWASNSKYALIGALRAVAQTISYEVTLAIILLSLVLTNGSFTLSTLTTTQEHMWLVLPTWPLTMMWFTSTLAETNRAPFDLSEGESELVSGFNVEYAAGPFALFFMAEYANIILMNSLTTALFFGAFHNPSLPELHTINFITKTLILTTMFLWIRASYPRFRYDQLMHLLWKNFLPLTLAMCMWHVSTSISFASIPPQT.

8 helical membrane passes run 3–23, 69–89, 100–120, 135–155, 171–191, 213–233, 253–273, and 294–314; these read TTNI…LTLV, FMFT…WIPL, LGIL…LWSG, AVAQ…SLVL, HMWL…STLA, VEYA…NIIL, ELHT…FLWI, and LPLT…FASI.

It belongs to the complex I subunit 1 family.

It localises to the mitochondrion inner membrane. The enzyme catalyses a ubiquinone + NADH + 5 H(+)(in) = a ubiquinol + NAD(+) + 4 H(+)(out). Its function is as follows. Core subunit of the mitochondrial membrane respiratory chain NADH dehydrogenase (Complex I) that is believed to belong to the minimal assembly required for catalysis. Complex I functions in the transfer of electrons from NADH to the respiratory chain. The immediate electron acceptor for the enzyme is believed to be ubiquinone. This Choloepus didactylus (Southern two-toed sloth) protein is NADH-ubiquinone oxidoreductase chain 1 (MT-ND1).